The sequence spans 104 residues: Transcription initiation factor IIA subunit 2 (104 aa).

Belongs to the TFIIA subunit 2 family. In terms of assembly, TFIIA is a heterodimer of the large unprocessed subunit 1 and a small subunit gamma.

It localises to the nucleus. In terms of biological role, TFIIA is a component of the transcription machinery of RNA polymerase II and plays an important role in transcriptional activation. TFIIA in a complex with TBP mediates transcriptional activity. This Schistosoma mansoni (Blood fluke) protein is Transcription initiation factor IIA subunit 2.